The sequence spans 386 residues: Patatin (386 aa).

A signal peptide spans 1 to 23 (MATTKSFLILFFMILATTSSTCA). Residues 32–229 (LSIDGGGIKG…TVGDPALLSL (198 aa)) form the PNPLA domain. The GXGXXG signature appears at 36–41 (GGGIKG). The GXSXG motif lies at 75 to 79 (GTSTG). The Nucleophile role is filled by Ser77. An N-linked (GlcNAc...) asparagine glycan is attached at Asn115. The active-site Proton acceptor is the Asp215. Positions 215–217 (DGA) match the DGA/G motif.

The protein belongs to the patatin family.

Its subcellular location is the vacuole. Functionally, probable lipolytic acyl hydrolase (LAH), an activity which is thought to be involved in the response of tubers to pathogens. In Solanum tuberosum (Potato), this protein is Patatin.